The chain runs to 328 residues: MLNEFPIFDYEDIQLIPNKCVIKSRAEADTSVTLGNHTFKLPVVPANMQTILDENVAEQLAKGGYFYIMHRFDEAGRIPFIKRMHNQGLIASISVGVKDYEYDFVRQLKTDAPEYITIDIAHGHADSVISMIQHIKKELPDTFVIAGNVGTPEAVRELENAGADATKVGIGPGKVCITKVKTGFGTGGWQLAALRWCVKAARKPIIADGGIRTHGDIAKSIRFGASMIMIGSLFAGHIESPGKTIEVDGEQFKEYYGSASQYQKGAYKNVEGKRILLPAKGHLQDTLTEMEQDLQSAISYAGGRQVADLKHVDYVIVKNSIWNGDASH.

Cys176 (thioimidate intermediate) is an active-site residue. Ile205–Ile228 is a binding site for NADP(+).

It belongs to the IMPDH/GMPR family. GuaC type 2 subfamily.

The enzyme catalyses IMP + NH4(+) + NADP(+) = GMP + NADPH + 2 H(+). In terms of biological role, catalyzes the irreversible NADPH-dependent deamination of GMP to IMP. It functions in the conversion of nucleobase, nucleoside and nucleotide derivatives of G to A nucleotides, and in maintaining the intracellular balance of A and G nucleotides. The polypeptide is GMP reductase (Streptococcus pneumoniae (strain JJA)).